Reading from the N-terminus, the 973-residue chain is Short transient receptor potential channel 5 (973 aa).

Over 1–325 the chain is Cytoplasmic; it reads MAQLYYKKVN…YDGFPGWRRK (325 aa). 4 ANK repeats span residues 30–60, 69–97, 98–124, and 141–170; these read SAEE…IYYN, LGRS…VYVG, DALL…PSGE, and PDIT…TIPR. Zn(2+)-binding residues include histidine 172, cysteine 176, cysteine 178, and cysteine 181. Positions 326–360 form an intramembrane region, discontinuously helical; it reads HWVVKLLTCMTIGFLFPMLSIAYLISPRSNLGLFI. At 361–363 the chain is on the cytoplasmic side; that stretch reads KKP. Residues 364-384 traverse the membrane as a helical segment; the sequence is FIKFICHTASYLTFLFMLLLA. Residues 385-404 are Extracellular-facing; the sequence is SQHIVRTDLHVQGPPPTVVE. Residues 405–419 traverse the membrane as a helical segment; that stretch reads WMILPWVLGFIWGEI. Ca(2+) is bound by residues glutamate 418, glutamate 421, asparagine 436, and aspartate 439. At 420–433 the chain is on the cytoplasmic side; it reads KEMWDGGFTEYIHD. Residues 434 to 454 traverse the membrane as a helical segment; the sequence is WWNLMDFAMNSLYLATISLKI. Residues 455–476 lie on the Extracellular side of the membrane; the sequence is VAYVKYNGSRPREEWEMWHPTL. Asparagine 461 carries an N-linked (GlcNAc...) asparagine glycan. A helical transmembrane segment spans residues 477-497; it reads IAEALFAISNILSSLRLISLF. Topologically, residues 498 to 512 are cytoplasmic; sequence TANSHLGPLQISLGR. The helical transmembrane segment at 513 to 535 threads the bilayer; the sequence is MLLDILKFLFIYCLVLLAFANGL. Topologically, residues 536-603 are extracellular; sequence NQLYFYYETR…HEFTEFVGAT (68 aa). Residues cysteine 553 and cysteine 558 are joined by a disulfide bond. A helical transmembrane segment spans residues 604 to 624; it reads MFGTYNVISLVVLLNMLIAMM. Over 625–973 the chain is Cytoplasmic; that stretch reads NNSYQLIADH…GQEEQVTTRL (349 aa). 2 disordered regions span residues 766–794 and 810–837; these read HPRS…RAKS and GPPL…KRSF. Positions 971–973 are essential for binding to NHERF1 PDZ domain; sequence TRL.

The protein belongs to the transient receptor (TC 1.A.4) family. STrpC subfamily. TRPC5 sub-subfamily. In terms of assembly, homotetramer. Heterotetramer with TRPC1 and/or TRPC4. Each subunit in the homomeric ion channel (via ANK repeats) interacts with one copy of GTP-bound GNAI3; the interaction is direct and activates the ion channel. Interacts with TRPC4AP. Interacts with NHERF1. Interacts with MX1 and RNF24. Interacts (via C-terminus) with CABP1. Interacts with SESTD1 (via the spectrin 1 repeat). Interacts with PLSCR1. Interacts with PKD2L2. As to expression, expressed in brain with higher levels in fetal brain. Found in cerebellum and occipital pole.

Its subcellular location is the cell membrane. The catalysed reaction is Ca(2+)(in) = Ca(2+)(out). Its activity is regulated as follows. Activated by G-protein coupled receptors via direct interaction with GTP-bound GNAI3, which increases the channel sensitivity to phosphatidylinositol bisphosphate. May be activated by intracellular calcium store depletion. Calcium channel activity is enhanced by MYLK, that promotes its subcellular localization at the plasma membrane. In terms of biological role, forms a receptor-activated non-selective calcium permeant cation channel. Mediates calcium-dependent phosphatidylserine externalization and apoptosis in neurons via its association with PLSCR1. Acts on distinct neuronal populations in the hypothalamus to regulate innate behaviors including feeding, anxiety (flight/fight/fear), socialization, and maternal care. The chain is Short transient receptor potential channel 5 (TRPC5) from Homo sapiens (Human).